A 358-amino-acid chain; its full sequence is Methylthioribose-1-phosphate isomerase (358 aa).

Residues 54-56 (RGA), Arg-96, and Gln-205 contribute to the substrate site. Asp-246 functions as the Proton donor in the catalytic mechanism. Residue 256 to 257 (NK) coordinates substrate.

This sequence belongs to the eIF-2B alpha/beta/delta subunits family. MtnA subfamily.

The catalysed reaction is 5-(methylsulfanyl)-alpha-D-ribose 1-phosphate = 5-(methylsulfanyl)-D-ribulose 1-phosphate. The protein operates within amino-acid biosynthesis; L-methionine biosynthesis via salvage pathway; L-methionine from S-methyl-5-thio-alpha-D-ribose 1-phosphate: step 1/6. In terms of biological role, catalyzes the interconversion of methylthioribose-1-phosphate (MTR-1-P) into methylthioribulose-1-phosphate (MTRu-1-P). The chain is Methylthioribose-1-phosphate isomerase from Pseudomonas syringae pv. syringae (strain B728a).